The primary structure comprises 722 residues: Golgin subfamily A member 5 (722 aa).

Over 1 to 689 (MSWFTDLAGR…IFLRRYPIAR (689 aa)) the chain is Cytoplasmic. Disordered regions lie at residues 90–158 (TRSS…VKPI) and 194–215 (TLSDSGSSASLSTTGDPKSHEL). Low complexity predominate over residues 91 to 109 (RSSIESSHNSSVNVSSHRS). Basic and acidic residues predominate over residues 134 to 148 (DKVHSSSQKETRKES). Residues 149 to 158 (ASVNQAVKPI) show a composition bias toward polar residues. Residues 195–209 (LSDSGSSASLSTTGD) are compositionally biased toward low complexity. The stretch at 211–622 (KSHELSNLRL…LEHQLKNVQG (412 aa)) forms a coiled coil. Residues 690–710 (VFIIIYMALLHLWVMIVLLTY) form a helical; Anchor for type IV membrane protein membrane-spanning segment. Residues 711-722 (TPEMHHDTPSGK) are Lumenal-facing.

It is found in the golgi apparatus membrane. Its function is as follows. Involved in maintaining Golgi structure. Stimulates the formation of Golgi stacks and ribbons. Involved in intra-Golgi retrograde transport. This is Golgin subfamily A member 5 (golga5) from Xenopus laevis (African clawed frog).